The following is a 309-amino-acid chain: Malate dehydrogenase (309 aa).

Residues 8–13 (GAGLVG) and Asp-33 each bind NAD(+). Substrate is bound by residues Arg-82 and Arg-88. NAD(+) is bound by residues Asn-95 and 118 to 120 (VSN). Residues Asn-120 and Arg-151 each coordinate substrate. Catalysis depends on His-175, which acts as the Proton acceptor.

This sequence belongs to the LDH/MDH superfamily. MDH type 3 family.

The enzyme catalyses (S)-malate + NAD(+) = oxaloacetate + NADH + H(+). Its function is as follows. Catalyzes the reversible oxidation of malate to oxaloacetate. The polypeptide is Malate dehydrogenase (Pseudomonas putida (strain ATCC 700007 / DSM 6899 / JCM 31910 / BCRC 17059 / LMG 24140 / F1)).